An 89-amino-acid chain; its full sequence is MSITAERKAELIKTHARGEADTGSAEVQVAILSERISNLTEHFKTHKKDNHSRRGLLKLVSQRRSLLDHLKKADQARYQDLIEKLGLRR.

The span at 1–20 (MSITAERKAELIKTHARGEA) shows a compositional bias: basic and acidic residues. Residues 1–24 (MSITAERKAELIKTHARGEADTGS) are disordered.

The protein belongs to the universal ribosomal protein uS15 family. In terms of assembly, part of the 30S ribosomal subunit. Forms a bridge to the 50S subunit in the 70S ribosome, contacting the 23S rRNA.

One of the primary rRNA binding proteins, it binds directly to 16S rRNA where it helps nucleate assembly of the platform of the 30S subunit by binding and bridging several RNA helices of the 16S rRNA. In terms of biological role, forms an intersubunit bridge (bridge B4) with the 23S rRNA of the 50S subunit in the ribosome. In Phenylobacterium zucineum (strain HLK1), this protein is Small ribosomal subunit protein uS15.